The chain runs to 21 residues: M-lycotoxin-Ls4a (21 aa).

A Leucine amide modification is found at Leu21.

In terms of tissue distribution, expressed by the venom gland.

The protein resides in the secreted. Functionally, may inhibit growth of bacteria. This Lycosa singoriensis (Wolf spider) protein is M-lycotoxin-Ls4a.